Consider the following 304-residue polypeptide: 2-phospho-L-lactate transferase (304 aa).

Asp49 contacts 7,8-didemethyl-8-hydroxy-5-deazariboflavin.

The protein belongs to the CofD family. In terms of assembly, homodimer. Mg(2+) is required as a cofactor.

It carries out the reaction (2S)-lactyl-2-diphospho-5'-guanosine + 7,8-didemethyl-8-hydroxy-5-deazariboflavin = oxidized coenzyme F420-0 + GMP + H(+). Its pathway is cofactor biosynthesis; coenzyme F420 biosynthesis. Functionally, catalyzes the transfer of the 2-phospholactate moiety from (2S)-lactyl-2-diphospho-5'-guanosine to 7,8-didemethyl-8-hydroxy-5-deazariboflavin (FO) with the formation of oxidized coenzyme F420-0 and GMP. The chain is 2-phospho-L-lactate transferase from Methanocorpusculum labreanum (strain ATCC 43576 / DSM 4855 / Z).